The chain runs to 509 residues: Activin receptor type-1 (509 aa).

The N-terminal stretch at 1-20 (MVDGVMILPVLMMMAFPSPS) is a signal peptide. Topologically, residues 21-123 (VEDEKPKVNQ…FPGTQNFHLE (103 aa)) are extracellular. A glycan (N-linked (GlcNAc...) asparagine) is linked at Asn-102. The helical transmembrane segment at 124-146 (VGLIILSVVFAVCLLACILGVAL) threads the bilayer. The Cytoplasmic segment spans residues 147 to 509 (RKFKRRNQER…NSLDKLKTDC (363 aa)). One can recognise a GS domain in the interval 178–207 (STLAELLDHSCTSGSGSGLPFLVQRTVARQ). The region spanning 208–502 (ITLLECVGKG…KTLTKIDNSL (295 aa)) is the Protein kinase domain. Residues 214-222 (VGKGRYGEV) and Lys-235 contribute to the ATP site. Residue Asp-336 is the Proton acceptor of the active site. Ser-501 carries the post-translational modification Phosphoserine.

The protein belongs to the protein kinase superfamily. TKL Ser/Thr protein kinase family. TGFB receptor subfamily. As to quaternary structure, interacts with FKBP1A. Interacts with FCHO1. Interacts with CLU. Interacts with type II receptors AMHR2 and ACVR2A. Interacts with BMP7. Interacts with BMP9. Interacts with BMP6 (when glycosylated); the interaction may induce HAMP expression. Interacts with TSC22D1/TSC-22. It depends on Mg(2+) as a cofactor. Requires Mn(2+) as cofactor. In terms of tissue distribution, highly expressed in bone during developmental stages. Expressed in normal parenchymal cells, endothelial cells, fibroblasts and tumor-derived epithelial cells.

The protein resides in the membrane. It catalyses the reaction L-threonyl-[receptor-protein] + ATP = O-phospho-L-threonyl-[receptor-protein] + ADP + H(+). It carries out the reaction L-seryl-[receptor-protein] + ATP = O-phospho-L-seryl-[receptor-protein] + ADP + H(+). Bone morphogenetic protein (BMP) type I receptor that is involved in a wide variety of biological processes, including bone, heart, cartilage, nervous, and reproductive system development and regulation. As a type I receptor, forms heterotetrameric receptor complexes with the type II receptors AMHR2, ACVR2A ors ACVR2B. Upon binding of ligands such as BMP7 or BMP9 to the heteromeric complexes, type II receptors transphosphorylate ACVR1 intracellular domain. In turn, ACVR1 kinase domain is activated and subsequently phosphorylates SMAD1/5/8 proteins that transduce the signal. In addition to its role in mediating BMP pathway-specific signaling, suppresses TGFbeta/activin pathway signaling by interfering with the binding of activin to its type II receptor. Besides canonical SMAD signaling, can activate non-canonical pathways such as p38 mitogen-activated protein kinases/MAPKs. May promote the expression of HAMP, potentially via its interaction with BMP6. The protein is Activin receptor type-1 (Acvr1) of Mus musculus (Mouse).